The following is a 585-amino-acid chain: Proline-rich protein 14 (585 aa).

M1 is modified (N-acetylmethionine). Positions 1–135 are sufficient for heterochromatin association in interphase and chromatin association in anaphase; sequence MDLPGDSSPP…TLRRRSRTTP (135 aa). Disordered stretches follow at residues 23–46, 73–150, and 189–241; these read ALWG…PLEK, TSIP…RAPQ, and IVRQ…RPRL. The required for the interaction with GRB2 and sufficient to promote the phosphorylation of AKT and cell proliferation stretch occupies residues 85-378; the sequence is PVHRQPPASP…MARAPPPPRP (294 aa). The span at 119–132 shows a compositional bias: basic residues; sequence RIHRTSSTLRRRSR. The tract at residues 136-365 is required for nuclear lamina association; it reads GPEEGPSQKV…RPRPRRHTVG (230 aa). Positions 193–205 are enriched in pro residues; that stretch reads PTPPPGDLEPPFQ. S277 bears the Phosphoserine mark. 2 disordered regions span residues 290–445 and 525–557; these read EAEQ…KVSR and DSSL…PDVG. The span at 337–356 shows a compositional bias: pro residues; that stretch reads LGPPGPGTCTWPPAPPQPSR. Over residues 393-409 the composition is skewed to low complexity; the sequence is SPSLTTSCSSTASTSFS. The required for nuclear localization stretch occupies residues 518–535; it reads RRAVEFRDSSLPRSRRPS.

In terms of assembly, interacts (via proline-rich region) with GRB2 (via SH3 domain 2). Interacts (via N-terminus) with CBX5.

Its subcellular location is the chromosome. It is found in the nucleus. The protein localises to the nucleus lamina. The protein resides in the nucleoplasm. Functionally, functions in tethering peripheral heterochromatin to the nuclear lamina during interphase, possibly through the interaction with heterochromatin protein CBX5/HP1 alpha. Might play a role in reattaching heterochromatin to the nuclear lamina at mitotic exit. Promotes myoblast differentiation during skeletal myogenesis, possibly by stimulating transcription factor MyoD activity via binding to CBX5/HP1 alpha. Involved in the positive regulation of the PI3K-Akt-mTOR signaling pathway and in promoting cell proliferation, possibly via binding to GRB2. This is Proline-rich protein 14 (PRR14) from Homo sapiens (Human).